Here is a 638-residue protein sequence, read N- to C-terminus: Signal recognition particle receptor subunit alpha (638 aa).

Disordered regions lie at residues 132-244 (APTT…GKKA) and 283-316 (GTGSGGQLQDLDCSSSDDEGAAQNSTKPSATKGT). Basic and acidic residues-rich tracts occupy residues 137 to 146 (KKFEDSEKAK) and 153 to 165 (IETRGEKPKEKAK). Serine 177 carries the post-translational modification Phosphoserine. Residues 204–239 (LSKEELIRRKREEFIQKHGRGMEKSNKSTKSDAPKE) show a composition bias toward basic and acidic residues. Threonine 284 is subject to Phosphothreonine. 3 positions are modified to phosphoserine: serine 296, serine 297, and serine 298. The segment covering 304–314 (AQNSTKPSATK) has biased composition (polar residues). An NG domain region spans residues 419 to 636 (YVVTFCGVNG…NAKAVVAALM (218 aa)). GTP is bound at residue 425–432 (GVNGVGKS). Residue serine 473 is modified to Phosphoserine. 520–524 (DTAGR) is a GTP binding site. At threonine 578 the chain carries Phosphothreonine. Position 588–591 (588–591 (TKFD)) interacts with GTP.

It belongs to the GTP-binding SRP family. In terms of assembly, heterodimer with SRPRB. Interacts with the signal recognition particle (SRP) complex subunit SRP54. As to quaternary structure, (Microbial infection) May interact with Zika virus strain Mr-766 non-structural protein 4A/NS4A. May interact with Zika virus French Polynesia 10087PF/2013 non-structural protein 4A/NS4A. (Microbial infection) May interact with Dengue virus DENV2 16681 non-structural protein 4A/NS4A.

The protein localises to the endoplasmic reticulum membrane. Functionally, component of the signal recognition particle (SRP) complex receptor (SR). Ensures, in conjunction with the SRP complex, the correct targeting of the nascent secretory proteins to the endoplasmic reticulum membrane system. Forms a guanosine 5'-triphosphate (GTP)-dependent complex with the SRP subunit SRP54. SRP receptor compaction and GTPase rearrangement drive SRP-mediated cotranslational protein translocation into the ER. The sequence is that of Signal recognition particle receptor subunit alpha from Homo sapiens (Human).